The following is a 404-amino-acid chain: Probable tRNA sulfurtransferase (404 aa).

One can recognise a THUMP domain in the interval 60–165 (HEVAESLKEI…DEAAYISYEN (106 aa)). Residues 183–184 (ML), 208–209 (HF), arginine 265, glycine 287, and glutamine 296 each bind ATP.

This sequence belongs to the ThiI family.

It is found in the cytoplasm. The catalysed reaction is [ThiI sulfur-carrier protein]-S-sulfanyl-L-cysteine + a uridine in tRNA + 2 reduced [2Fe-2S]-[ferredoxin] + ATP + H(+) = [ThiI sulfur-carrier protein]-L-cysteine + a 4-thiouridine in tRNA + 2 oxidized [2Fe-2S]-[ferredoxin] + AMP + diphosphate. The enzyme catalyses [ThiS sulfur-carrier protein]-C-terminal Gly-Gly-AMP + S-sulfanyl-L-cysteinyl-[cysteine desulfurase] + AH2 = [ThiS sulfur-carrier protein]-C-terminal-Gly-aminoethanethioate + L-cysteinyl-[cysteine desulfurase] + A + AMP + 2 H(+). It functions in the pathway cofactor biosynthesis; thiamine diphosphate biosynthesis. Its function is as follows. Catalyzes the ATP-dependent transfer of a sulfur to tRNA to produce 4-thiouridine in position 8 of tRNAs, which functions as a near-UV photosensor. Also catalyzes the transfer of sulfur to the sulfur carrier protein ThiS, forming ThiS-thiocarboxylate. This is a step in the synthesis of thiazole, in the thiamine biosynthesis pathway. The sulfur is donated as persulfide by IscS. This chain is Probable tRNA sulfurtransferase, found in Streptococcus agalactiae serotype III (strain NEM316).